The following is a 529-amino-acid chain: Peptide chain release factor 3 (529 aa).

The tr-type G domain occupies 11–280 (AKRRTFAIIS…GLVAWAPAPM (270 aa)). Residues 20-27 (SHPDAGKT), 88-92 (DTPGH), and 142-145 (NKLD) each bind GTP.

Belongs to the TRAFAC class translation factor GTPase superfamily. Classic translation factor GTPase family. PrfC subfamily.

The protein localises to the cytoplasm. Increases the formation of ribosomal termination complexes and stimulates activities of RF-1 and RF-2. It binds guanine nucleotides and has strong preference for UGA stop codons. It may interact directly with the ribosome. The stimulation of RF-1 and RF-2 is significantly reduced by GTP and GDP, but not by GMP. The polypeptide is Peptide chain release factor 3 (prfC) (Salmonella typhi).